We begin with the raw amino-acid sequence, 712 residues long: Ribosomal RNA large subunit methyltransferase K/L (712 aa).

The 112-residue stretch at 46 to 157 folds into the THUMP domain; sequence GAYQALLHSR…RENMVVSLDL (112 aa).

It belongs to the methyltransferase superfamily. RlmKL family.

It is found in the cytoplasm. It carries out the reaction guanosine(2445) in 23S rRNA + S-adenosyl-L-methionine = N(2)-methylguanosine(2445) in 23S rRNA + S-adenosyl-L-homocysteine + H(+). The catalysed reaction is guanosine(2069) in 23S rRNA + S-adenosyl-L-methionine = N(2)-methylguanosine(2069) in 23S rRNA + S-adenosyl-L-homocysteine + H(+). Its function is as follows. Specifically methylates the guanine in position 2445 (m2G2445) and the guanine in position 2069 (m7G2069) of 23S rRNA. The chain is Ribosomal RNA large subunit methyltransferase K/L from Actinobacillus pleuropneumoniae serotype 3 (strain JL03).